The primary structure comprises 268 residues: Probable ribosomal RNA small subunit methyltransferase A (268 aa).

6 residues coordinate S-adenosyl-L-methionine: H23, L25, G50, E71, D95, and N110.

It belongs to the class I-like SAM-binding methyltransferase superfamily. rRNA adenine N(6)-methyltransferase family. RsmA subfamily.

It is found in the cytoplasm. Functionally, specifically dimethylates two adjacent adenosines in the loop of a conserved hairpin near the 3'-end of 16S rRNA in the 30S particle. May play a critical role in biogenesis of 30S subunits. The sequence is that of Probable ribosomal RNA small subunit methyltransferase A from Pyrococcus horikoshii (strain ATCC 700860 / DSM 12428 / JCM 9974 / NBRC 100139 / OT-3).